Reading from the N-terminus, the 111-residue chain is uncharacterized protein (111 aa).

Residues 43–72 form a disordered region; that stretch reads NGRAEETEADAPLPEEPSLPDLPDLSDLDS. The span at 61-72 shows a compositional bias: low complexity; the sequence is LPDLPDLSDLDS.

This is an uncharacterized protein from Homo sapiens (Human).